The primary structure comprises 598 residues: Cytochrome P450 monooxygenase phmB (598 aa).

Residues 107 to 127 (VAAKIAALLFVAGLFWAVSVL) form a helical membrane-spanning segment. Residues Asn-171, Asn-428, and Asn-494 are each glycosylated (N-linked (GlcNAc...) asparagine). Cys-542 serves as a coordination point for heme. N-linked (GlcNAc...) asparagine glycosylation is found at Asn-549 and Asn-581.

Belongs to the cytochrome P450 family. The cofactor is heme.

The protein localises to the membrane. Its pathway is mycotoxin biosynthesis. Cytochrome P450 monooxygenase; part of the gene cluster that mediates the biosynthesis of the mycotoxins phomacins, leucine-derived cytochalasans with potent actin polymerization-inhibitory activities and monocot-specific antigerminative activities. The first step in the pathway is catalyzed by the hybrid PKS-NRPS phmA, assisted by the enoyl reductase phmE, that are responsible for fusion of the leucine precursor and the polyketide backbone to produce a 2-pyrrolidone intermediate. The polyketide synthase module (PKS) of phmA is responsible for the synthesis of the polyketide backbone and the downstream nonribosomal peptide synthetase (NRPS) amidates the carboxyl end of the polyketide with the leucine precursor. Because phmA lacks a designated enoylreductase (ER) domain, the required activity is provided the enoyl reductase phmE. Reduction by the hydrolyase phmG, followed by dehydration and intra-molecular Diels-Alder cyclization by the Diels-Alderase phmD then yield the required isoindolone-fused macrocycle. A number of oxidative steps catalyzed by the tailoring cytochrome P450 monooxygenase phmB, the FAD-linked oxidoreductase phmC and the short-chain dehydrogenase/reductase phmF, are further required to afford the final products, phomacin D and phomacin E. This is Cytochrome P450 monooxygenase phmB from Phaeosphaeria nodorum (strain SN15 / ATCC MYA-4574 / FGSC 10173) (Glume blotch fungus).